A 68-amino-acid chain; its full sequence is uncharacterized protein (68 aa).

The interval 1-68 is disordered; the sequence is METIIRRFSP…GNSKNIKTKK (68 aa). The segment covering 9–34 has biased composition (basic and acidic residues); it reads SPKEKEKEKEKEEKDEKSKDKKEPIK. Residues 42–51 are compositionally biased toward acidic residues; that stretch reads DEEEEEDEQE.

This is an uncharacterized protein from Dictyostelium discoideum (Social amoeba).